The primary structure comprises 90 residues: MGLPGGWELVLIVGVLVLLFGATKLPQMARSLGQSARVFKAEARGMKEDEEAAKREKQAKSEPQQLTAGESSAPTVASPVEETQRNDSKK.

The helical transmembrane segment at 1 to 21 threads the bilayer; that stretch reads MGLPGGWELVLIVGVLVLLFG. Basic and acidic residues predominate over residues 42–60; sequence EARGMKEDEEAAKREKQAK. The interval 42-90 is disordered; it reads EARGMKEDEEAAKREKQAKSEPQQLTAGESSAPTVASPVEETQRNDSKK. Over residues 61–75 the composition is skewed to polar residues; that stretch reads SEPQQLTAGESSAPT.

The protein belongs to the TatA/E family. As to quaternary structure, the Tat system comprises two distinct complexes: a TatABC complex, containing multiple copies of TatA, TatB and TatC subunits, and a separate TatA complex, containing only TatA subunits. Substrates initially bind to the TatABC complex, which probably triggers association of the separate TatA complex to form the active translocon.

It localises to the cell membrane. Part of the twin-arginine translocation (Tat) system that transports large folded proteins containing a characteristic twin-arginine motif in their signal peptide across membranes. TatA could form the protein-conducting channel of the Tat system. In Saccharopolyspora erythraea (strain ATCC 11635 / DSM 40517 / JCM 4748 / NBRC 13426 / NCIMB 8594 / NRRL 2338), this protein is Sec-independent protein translocase protein TatA.